We begin with the raw amino-acid sequence, 493 residues long: Geraniol 8-hydroxylase (493 aa).

At methionine 1 to isoleucine 6 the chain is on the lumenal side. A helical membrane pass occupies residues isoleucine 7–leucine 23. Topologically, residues serine 24 to leucine 493 are cytoplasmic. Cysteine 436 provides a ligand contact to heme.

It belongs to the cytochrome P450 family. Heme is required as a cofactor. Expressed in roots, stems, leaves and flower buds. Hardly detected in mature flowers and fruits. Expressed in the internal phloem-associated parenchyma.

The protein resides in the endoplasmic reticulum membrane. It catalyses the reaction (2E)-geraniol + reduced [NADPH--hemoprotein reductase] + O2 = (6E)-8-hydroxygeraniol + oxidized [NADPH--hemoprotein reductase] + H2O + H(+). Hydroxylase involved in the biosynthesis of hydroxygeraniol, a precursor of the terpenoid indole alkaloids such as vinblastine and vincristine. Also able to hydroxylate in vitro nerol and to catalyze 3'-hydroxylation of the flavanone naringenin to form eriodictyol. No activity with apigenin, kaempferol, p-coumaric acid and ferulic acid as substrates. In Catharanthus roseus (Madagascar periwinkle), this protein is Geraniol 8-hydroxylase (CYP76B6).